The sequence spans 409 residues: uncharacterized protein (409 aa).

The HTH arsR-type domain occupies 305–409 (LTKIDEKVVK…LIGEDDELEM (105 aa)).

This is an uncharacterized protein from Methanocaldococcus jannaschii (strain ATCC 43067 / DSM 2661 / JAL-1 / JCM 10045 / NBRC 100440) (Methanococcus jannaschii).